The following is a 621-amino-acid chain: Type 2 DNA topoisomerase 6 subunit B (621 aa).

Residues Asn48, Asp80, 101–102 (SR), 111–118 (GQQGIGIS), and Lys435 contribute to the ATP site.

Belongs to the TOP6B family. In terms of assembly, homodimer. Heterotetramer of two Top6A and two Top6B chains.

It carries out the reaction ATP-dependent breakage, passage and rejoining of double-stranded DNA.. Functionally, relaxes both positive and negative superturns and exhibits a strong decatenase activity. The polypeptide is Type 2 DNA topoisomerase 6 subunit B (Methanosarcina barkeri (strain Fusaro / DSM 804)).